We begin with the raw amino-acid sequence, 229 residues long: Platelet-activating factor acetylhydrolase IB subunit alpha2 (229 aa).

Active-site residues include serine 48, aspartate 193, and histidine 196.

It belongs to the 'GDSL' lipolytic enzyme family. Platelet-activating factor acetylhydrolase IB beta/gamma subunits subfamily. Forms a catalytic dimer which is either homodimer (alpha2/alpha2 homodimer) or heterodimer with PAFAH1B3 (alpha2/alpha1 heterodimer). Component of the cytosolic (PAF-AH (I)) heterotetrameric enzyme, which is composed of PAFAH1B1 (beta), PAFAH1B2 (alpha2) and PAFAH1B3 (alpha1) subunits. The catalytic activity of the enzyme resides in the alpha1 (PAFAH1B3) and alpha2 (PAFAH1B2) subunits, whereas the beta subunit (PAFAH1B1) has regulatory activity. Trimer formation is not essential for the catalytic activity.

Its subcellular location is the cytoplasm. It carries out the reaction a 1-O-alkyl-2-acetyl-sn-glycero-3-phosphocholine + H2O = a 1-O-alkyl-sn-glycero-3-phosphocholine + acetate + H(+). The catalysed reaction is 1-O-hexadecyl-2-acetyl-sn-glycero-3-phosphocholine + H2O = 1-O-hexadecyl-sn-glycero-3-phosphocholine + acetate + H(+). The enzyme catalyses 1-O-hexadecyl-2-acetyl-sn-glycero-3-phosphate + H2O = 1-O-hexadecyl-sn-glycero-3-phosphate + acetate + H(+). It catalyses the reaction 1-O-hexadecyl-2-acetyl-sn-glycero-3-phosphoethanolamine + H2O = 1-O-hexadecyl-sn-glycero-3-phosphoethanolamine + acetate + H(+). In terms of biological role, alpha2 catalytic subunit of the cytosolic type I platelet-activating factor (PAF) acetylhydrolase (PAF-AH (I)) heterotetrameric enzyme that catalyzes the hydrolyze of the acetyl group at the sn-2 position of PAF and its analogs and modulates the action of PAF. The protein is Platelet-activating factor acetylhydrolase IB subunit alpha2 (PAFAH1B2) of Gallus gallus (Chicken).